The primary structure comprises 102 residues: Small ribosomal subunit protein uS10 (102 aa).

The protein belongs to the universal ribosomal protein uS10 family. As to quaternary structure, part of the 30S ribosomal subunit.

Functionally, involved in the binding of tRNA to the ribosomes. This Agrobacterium fabrum (strain C58 / ATCC 33970) (Agrobacterium tumefaciens (strain C58)) protein is Small ribosomal subunit protein uS10.